Reading from the N-terminus, the 982-residue chain is Serine/threonine-protein kinase PknD (982 aa).

The 292-residue stretch at 51–342 (YQIIKSIGKG…ELIRDIENYL (292 aa)) folds into the Protein kinase domain. Residues 57–65 (IGKGGMGEV) and Lys80 each bind ATP. Catalysis depends on Asp186, which acts as the Proton acceptor.

It belongs to the protein kinase superfamily. Ser/Thr protein kinase family. Post-translationally, autophosphorylated on serine and threonine residues.

It carries out the reaction L-seryl-[protein] + ATP = O-phospho-L-seryl-[protein] + ADP + H(+). It catalyses the reaction L-threonyl-[protein] + ATP = O-phospho-L-threonyl-[protein] + ADP + H(+). Functionally, together with the serine/threonine kinase Pkn1, may play a role in the specific interactions with host proteins during intracellular growth. The chain is Serine/threonine-protein kinase PknD from Protochlamydia amoebophila (strain UWE25).